Reading from the N-terminus, the 694-residue chain is Zinc finger BED domain-containing protein 5 (694 aa).

A BED-type zinc finger spans residues 109–165; that stretch reads RKYDESYLSFGFTYFGNRDAPHAQCVLCKKILSNSSLAPSKLRRHLETKHAAYKDKD. The Zn(2+) site is built by Cys133, Cys136, His153, and His158.

The sequence is that of Zinc finger BED domain-containing protein 5 (ZBED5) from Canis lupus familiaris (Dog).